The primary structure comprises 463 residues: Cysteine--tRNA ligase (463 aa).

A Zn(2+)-binding site is contributed by C29. A 'HIGH' region motif is present at residues 31–41; the sequence is PTVYDFAHIGN. C227, H252, and E256 together coordinate Zn(2+). The 'KMSKS' region motif lies at 285 to 289; it reads KMSKS. An ATP-binding site is contributed by K288.

Belongs to the class-I aminoacyl-tRNA synthetase family. Monomer. Zn(2+) serves as cofactor.

It localises to the cytoplasm. It carries out the reaction tRNA(Cys) + L-cysteine + ATP = L-cysteinyl-tRNA(Cys) + AMP + diphosphate. The protein is Cysteine--tRNA ligase of Rhodopseudomonas palustris (strain BisA53).